The primary structure comprises 843 residues: Neuroligin-1 (843 aa).

The signal sequence occupies residues 1-45 (MALPRCMWPNYVWRAMMACVVHRGSGAPLTLCLLGCLLQTFHVLS). Over 46–697 (QKLDDVDPLV…DQRDYSTELS (652 aa)) the chain is Extracellular. N-linked (GlcNAc...) (complex) asparagine glycosylation is present at Asn109. 2 disulfide bridges follow: Cys117–Cys153 and Cys172–Cys181. 2 N-linked (GlcNAc...) (complex) asparagine glycosylation sites follow: Asn303 and Asn343. 2 disulfide bridges follow: Cys342-Cys353 and Cys512-Cys546. The N-linked (GlcNAc...) asparagine glycan is linked to Asn547. The disordered stretch occupies residues 647 to 688 (TKVPSTDITLRPTRKNSTPVTSAFPTAKQDDPKQQPSPFSVD). Positions 661–670 (KNSTPVTSAF) are enriched in polar residues. Residues Ser683 and Ser686 are each glycosylated (O-linked (GalNAc...) serine). A helical transmembrane segment spans residues 698–718 (VTIAVGASLLFLNILAFAALY). Topologically, residues 719-843 (YKKDKRRHDV…HPHSHSTTRV (125 aa)) are cytoplasmic. The segment at 822–843 (GGQNNTLPHPHPHPHSHSTTRV) is disordered. The span at 831-843 (PHPHPHSHSTTRV) shows a compositional bias: basic residues.

The protein belongs to the type-B carboxylesterase/lipase family. As to quaternary structure, interacts with neurexins NRXN1, NRXN2 and NRXN3. Interaction with neurexins is mediated by heparan sulfate glycan modification on neurexin. Interacts with NLGN3. Interacts (via its C-terminus) with DLG4/PSD-95 (via PDZ domain 3). Interacts with GOPC. Interacts with AIP1 and PDZRN3. In terms of processing, the N-terminus is blocked. Expressed in brain, almost exclusively in neurons, and spinal cord. Detected in pancreas islet beta cells.

It is found in the cell membrane. It localises to the postsynaptic density. The protein localises to the synaptic cleft. Its subcellular location is the synaptic cell membrane. Functionally, cell surface protein involved in cell-cell-interactions via its interactions with neurexin family members. Plays a role in synapse function and synaptic signal transmission, and probably mediates its effects by recruiting and clustering other synaptic proteins. May promote the initial formation of synapses, but is not essential for this. In vitro, triggers the de novo formation of presynaptic structures. May be involved in specification of excitatory synapses. Required to maintain wakefulness quality and normal synchrony of cerebral cortex activity during wakefulness and sleep. The protein is involved in nervous system development. The sequence is that of Neuroligin-1 (Nlgn1) from Rattus norvegicus (Rat).